The primary structure comprises 872 residues: Valine--tRNA ligase (872 aa).

A 'HIGH' region motif is present at residues 49–59 (PNVTGILHIGH). A 'KMSKS' region motif is present at residues 531-535 (KMSKS). Lys-534 is a binding site for ATP. Positions 810-871 (PLIARLKKQL…IQQELDLLEQ (62 aa)) form a coiled coil.

The protein belongs to the class-I aminoacyl-tRNA synthetase family. ValS type 1 subfamily. In terms of assembly, monomer.

The protein resides in the cytoplasm. The enzyme catalyses tRNA(Val) + L-valine + ATP = L-valyl-tRNA(Val) + AMP + diphosphate. In terms of biological role, catalyzes the attachment of valine to tRNA(Val). As ValRS can inadvertently accommodate and process structurally similar amino acids such as threonine, to avoid such errors, it has a 'posttransfer' editing activity that hydrolyzes mischarged Thr-tRNA(Val) in a tRNA-dependent manner. The sequence is that of Valine--tRNA ligase from Helicobacter pylori (strain J99 / ATCC 700824) (Campylobacter pylori J99).